The chain runs to 322 residues: Phosphatidylglycerol--prolipoprotein diacylglyceryl transferase (322 aa).

The next 4 helical transmembrane spans lie at 21–41 (PLPI…AIWL), 50–70 (GGNP…GIIG), 98–118 (NGGL…WAYF), and 123–143 (IPLA…QAIG). An a 1,2-diacyl-sn-glycero-3-phospho-(1'-sn-glycerol)-binding site is contributed by Arg-144. The next 2 helical transmembrane spans lie at 191–211 (VHPT…LLIW) and 254–274 (INTL…LRLG). Positions 283–322 (VDPAYHAAQAERDDTETAGLDATTGTVPGDSPETTGKKRK) are disordered.

The protein belongs to the Lgt family.

The protein localises to the cell membrane. It carries out the reaction L-cysteinyl-[prolipoprotein] + a 1,2-diacyl-sn-glycero-3-phospho-(1'-sn-glycerol) = an S-1,2-diacyl-sn-glyceryl-L-cysteinyl-[prolipoprotein] + sn-glycerol 1-phosphate + H(+). It functions in the pathway protein modification; lipoprotein biosynthesis (diacylglyceryl transfer). Its function is as follows. Catalyzes the transfer of the diacylglyceryl group from phosphatidylglycerol to the sulfhydryl group of the N-terminal cysteine of a prolipoprotein, the first step in the formation of mature lipoproteins. In Corynebacterium efficiens (strain DSM 44549 / YS-314 / AJ 12310 / JCM 11189 / NBRC 100395), this protein is Phosphatidylglycerol--prolipoprotein diacylglyceryl transferase.